Here is a 345-residue protein sequence, read N- to C-terminus: MFSALRHRTAALALGVCFILPVHASSPKPGDFANTQARHIATFFPGRMTGTPAEMLSADYIRQQFQQMGYRSDIRTFNSRYIYTARDNRKSWHNVTGSTVIAAHEGKAPQQIIIMAHLDTYAPLSDADADANLGGLTLQGMDDNAAGLGVMLELAERLKNTPTEYGIRFVATSGEEEGKLGAENLLKRMSDTEKKNTLLVINLDNLIVGDKLYFNSGVKTPEAVRKLTRDRALAIARSHGIAATTNPGLNKNYPKGTGCCNDAEIFDKAGIAVLSVEATNWNLGNKDGYQQRAKTPAFPAGNSWHDVRLDNHQHIDKALPGRIERRCRDVMRIMLPLVKELAKAS.

The signal sequence occupies residues 1–24 (MFSALRHRTAALALGVCFILPVHA). The Zn(2+) site is built by His117, Asp143, Glu176, and Asp204.

Belongs to the peptidase M28 family. M28C subfamily.

This protein, presumably an aminopeptidase, mediates the conversion of E.coli alkaline phosphatase isozyme 1, to isozymes 2 and 3 by removing, one by one, the two N-terminal arginine residues. This chain is Alkaline phosphatase isozyme conversion protein (iap), found in Escherichia coli (strain K12).